Reading from the N-terminus, the 909-residue chain is Nitrate reductase [NADH] (909 aa).

Cys187 is a Mo-molybdopterin binding site. Residues 535 to 610 enclose the Cytochrome b5 heme-binding domain; the sequence is SKMYSMSEVK…LEDFRIGELI (76 aa). Positions 570 and 593 each coordinate heme. Residues 652–764 enclose the FAD-binding FR-type domain; that stretch reads REKIPCKLVD…KGPLGHIEYQ (113 aa). Residues 704–707, 721–725, Phe726, Phe733, 738–740, and Thr791 each bind FAD; these read RAYT, VVKIY, and QMS.

The protein belongs to the nitrate reductase family. As to quaternary structure, homodimer. Requires FAD as cofactor. Heme is required as a cofactor. The cofactor is Mo-molybdopterin.

The enzyme catalyses nitrite + NAD(+) + H2O = nitrate + NADH + H(+). Its activity is regulated as follows. Regulated by the nitrogen source and controlled by the circadian rhythm. In terms of biological role, nitrate reductase is a key enzyme involved in the first step of nitrate assimilation in plants, fungi and bacteria. In Petunia hybrida (Petunia), this protein is Nitrate reductase [NADH] (NIA).